The primary structure comprises 512 residues: Cercosporin MFS transporter CTB4 (512 aa).

Transmembrane regions (helical) follow at residues 72–92, 110–130, 142–162, 170–190, 202–222, 230–250, 306–326, 343–363, 383–403, 407–427, 456–476, and 480–500; these read WVIT…SSVF, VVLG…IFWG, LLAG…ARSL, FLGG…LADI, TVGA…SVLV, WIAN…FPFL, ILLM…NFFL, ASLP…LLSF, LLLM…FAWT, TMNP…IHLI, LFAA…GVKW, and ILAL…YFGA.

Belongs to the major facilitator superfamily. CAR1 family.

It localises to the cell membrane. MFS transporter; part of the gene cluster that mediates the biosynthesis of cercosporin, a light-activated, non-host-selective toxin. The perylenequinone chromophore of cercosporin absorbs light energy to attain an electronically-activated triplet state and produces active oxygen species such as the hydroxyl radical, superoxide, hydrogen peroxide or singlet oxygen upon reaction with oxygen molecules. These reactive oxygen species cause damage to various cellular components including lipids, proteins and nucleic acids. Responsible for secretion and accumulation of cercosporin, but does not play any roles in self-protection against the toxicity of cercosporin. The sequence is that of Cercosporin MFS transporter CTB4 from Cercospora nicotianae (Barn spot disease fungus).